The following is a 61-amino-acid chain: Small ribosomal subunit protein uS14 (61 aa).

Zn(2+)-binding residues include C24, C27, C40, and C43.

Belongs to the universal ribosomal protein uS14 family. Zinc-binding uS14 subfamily. In terms of assembly, part of the 30S ribosomal subunit. Contacts proteins S3 and S10. Zn(2+) is required as a cofactor.

In terms of biological role, binds 16S rRNA, required for the assembly of 30S particles and may also be responsible for determining the conformation of the 16S rRNA at the A site. The protein is Small ribosomal subunit protein uS14 of Limosilactobacillus fermentum (strain NBRC 3956 / LMG 18251) (Lactobacillus fermentum).